A 275-amino-acid polypeptide reads, in one-letter code: Large ribosomal subunit protein uL2 (275 aa).

The segment at 224–275 (AMNPVDHPHGGGEAKAGQGNPHPVTPWGVPTKGYKTRKNKRTQQFIVRDRRG) is disordered.

Belongs to the universal ribosomal protein uL2 family. In terms of assembly, part of the 50S ribosomal subunit. Forms a bridge to the 30S subunit in the 70S ribosome.

One of the primary rRNA binding proteins. Required for association of the 30S and 50S subunits to form the 70S ribosome, for tRNA binding and peptide bond formation. It has been suggested to have peptidyltransferase activity; this is somewhat controversial. Makes several contacts with the 16S rRNA in the 70S ribosome. This is Large ribosomal subunit protein uL2 from Xanthomonas oryzae pv. oryzae (strain MAFF 311018).